The chain runs to 248 residues: ATP synthase subunit a, chloroplastic (248 aa).

5 helical membrane-spanning segments follow: residues 38-58 (QVLL…TIAV), 96-116 (VPFI…GALL), 135-155 (INTT…AGLT), 200-220 (LVVA…VMFL), and 221-241 (GLFT…AYIG).

This sequence belongs to the ATPase A chain family. In terms of assembly, F-type ATPases have 2 components, CF(1) - the catalytic core - and CF(0) - the membrane proton channel. CF(1) has five subunits: alpha(3), beta(3), gamma(1), delta(1), epsilon(1). CF(0) has four main subunits: a, b, b' and c.

It is found in the plastid. The protein localises to the chloroplast thylakoid membrane. Key component of the proton channel; it plays a direct role in the translocation of protons across the membrane. This chain is ATP synthase subunit a, chloroplastic, found in Pinus thunbergii (Japanese black pine).